The chain runs to 503 residues: Aspartyl/glutamyl-tRNA(Asn/Gln) amidotransferase subunit B (503 aa).

It belongs to the GatB/GatE family. GatB subfamily. Heterotrimer of A, B and C subunits.

The enzyme catalyses L-glutamyl-tRNA(Gln) + L-glutamine + ATP + H2O = L-glutaminyl-tRNA(Gln) + L-glutamate + ADP + phosphate + H(+). It carries out the reaction L-aspartyl-tRNA(Asn) + L-glutamine + ATP + H2O = L-asparaginyl-tRNA(Asn) + L-glutamate + ADP + phosphate + 2 H(+). Functionally, allows the formation of correctly charged Asn-tRNA(Asn) or Gln-tRNA(Gln) through the transamidation of misacylated Asp-tRNA(Asn) or Glu-tRNA(Gln) in organisms which lack either or both of asparaginyl-tRNA or glutaminyl-tRNA synthetases. The reaction takes place in the presence of glutamine and ATP through an activated phospho-Asp-tRNA(Asn) or phospho-Glu-tRNA(Gln). In Cereibacter sphaeroides (strain KD131 / KCTC 12085) (Rhodobacter sphaeroides), this protein is Aspartyl/glutamyl-tRNA(Asn/Gln) amidotransferase subunit B.